The following is a 310-amino-acid chain: Methionyl-tRNA formyltransferase (310 aa).

109 to 112 is a (6S)-5,6,7,8-tetrahydrofolate binding site; sequence SLLP.

This sequence belongs to the Fmt family.

It catalyses the reaction L-methionyl-tRNA(fMet) + (6R)-10-formyltetrahydrofolate = N-formyl-L-methionyl-tRNA(fMet) + (6S)-5,6,7,8-tetrahydrofolate + H(+). Functionally, attaches a formyl group to the free amino group of methionyl-tRNA(fMet). The formyl group appears to play a dual role in the initiator identity of N-formylmethionyl-tRNA by promoting its recognition by IF2 and preventing the misappropriation of this tRNA by the elongation apparatus. The sequence is that of Methionyl-tRNA formyltransferase from Pseudomonas putida (strain GB-1).